A 158-amino-acid polypeptide reads, in one-letter code: MATLPITKRGAEKLKAELHNLKTVQRPWVINAISEARAQGDLSENAEYEVAKDRQGFIEGRIQEIEGKLSAAQVIDPTTFETGTRVVFGSTVKLEDEATGDSVTYQIVGEDEADIKLGLVNIGSPIARALIGKDEGDSAEVQAPGGIRRYEIVTVLYI.

The protein belongs to the GreA/GreB family.

In terms of biological role, necessary for efficient RNA polymerase transcription elongation past template-encoded arresting sites. The arresting sites in DNA have the property of trapping a certain fraction of elongating RNA polymerases that pass through, resulting in locked ternary complexes. Cleavage of the nascent transcript by cleavage factors such as GreA or GreB allows the resumption of elongation from the new 3'terminus. GreA releases sequences of 2 to 3 nucleotides. The chain is Transcription elongation factor GreA from Polaromonas naphthalenivorans (strain CJ2).